A 200-amino-acid chain; its full sequence is Lipopolysaccharide core heptose(II)-phosphate phosphatase (200 aa).

The signal sequence occupies residues 1 to 25 (MLAFCRSSLKSKKYFIILLALAAIA).

This sequence belongs to the phosphoglycerate mutase family. Ais subfamily.

The protein localises to the periplasm. The protein operates within bacterial outer membrane biogenesis; lipopolysaccharide metabolism. Catalyzes the dephosphorylation of heptose(II) of the outer membrane lipopolysaccharide core. The polypeptide is Lipopolysaccharide core heptose(II)-phosphate phosphatase (Escherichia coli O157:H7 (strain EC4115 / EHEC)).